Here is an 858-residue protein sequence, read N- to C-terminus: Leucine--tRNA ligase (858 aa).

A 'HIGH' region motif is present at residues 53-63 (PYPSGNLHMGH). A 'KMSKS' region motif is present at residues 622-626 (KMSKS). Residue K625 coordinates ATP.

It belongs to the class-I aminoacyl-tRNA synthetase family.

The protein resides in the cytoplasm. The catalysed reaction is tRNA(Leu) + L-leucine + ATP = L-leucyl-tRNA(Leu) + AMP + diphosphate. This Prochlorococcus marinus subsp. pastoris (strain CCMP1986 / NIES-2087 / MED4) protein is Leucine--tRNA ligase.